An 83-amino-acid polypeptide reads, in one-letter code: Cell division topological specificity factor (83 aa).

It belongs to the MinE family.

In terms of biological role, prevents the cell division inhibition by proteins MinC and MinD at internal division sites while permitting inhibition at polar sites. This ensures cell division at the proper site by restricting the formation of a division septum at the midpoint of the long axis of the cell. The polypeptide is Cell division topological specificity factor (Pseudoalteromonas atlantica (strain T6c / ATCC BAA-1087)).